A 153-amino-acid polypeptide reads, in one-letter code: Large ribosomal subunit protein bL9 (153 aa).

It belongs to the bacterial ribosomal protein bL9 family.

Binds to the 23S rRNA. The polypeptide is Large ribosomal subunit protein bL9 (Mycoplasma mycoides subsp. mycoides SC (strain CCUG 32753 / NCTC 10114 / PG1)).